The chain runs to 672 residues: Poly-beta-1,6-N-acetyl-D-glucosamine N-deacetylase (672 aa).

Positions 1 to 20 (MLRNGNKYLLMLVSIIMLTA) are cleaved as a signal peptide. The N-palmitoyl cysteine moiety is linked to residue Cys21. Cys21 carries the S-diacylglycerol cysteine lipid modification. The region spanning 107-349 (KAVVLTFDDG…IQRVKDMQIS (243 aa)) is the NodB homology domain.

This sequence belongs to the polysaccharide deacetylase family.

It is found in the cell outer membrane. Functionally, catalyzes the N-deacetylation of poly-beta-1,6-N-acetyl-D-glucosamine (PGA), a biofilm adhesin polysaccharide. N-deacetylation promotes PGA export through the PgaA porin. The sequence is that of Poly-beta-1,6-N-acetyl-D-glucosamine N-deacetylase (pgaB) from Escherichia coli (strain K12).